Here is a 516-residue protein sequence, read N- to C-terminus: D-aminopeptidase (516 aa).

Residue Ser61 is the Nucleophile of the active site. Lys64 functions as the Proton donor/acceptor in the catalytic mechanism. The interval 476–486 (RRSMDAPAPGD) is important for specificity. Residue Asp480 coordinates substrate.

The protein belongs to the peptidase S12 family. As to quaternary structure, homodimer.

The enzyme catalyses Release of an N-terminal D-amino acid from a peptide, Xaa-|-Yaa-, in which Xaa is preferably D-Ala, D-Ser or D-Thr. D-amino acid amides and methyl esters also are hydrolyzed, as is glycine amide.. With respect to regulation, inhibited by beta-lactam compounds such as 6-aminopenicillic acid, 7-aminocephalosporanic acid, benzylpenicillin and ampicillin. Inhibited by p-chloromercuribenzoate. In terms of biological role, hydrolyzes N-terminal residues in D-amino acid-containing peptides. The protein is D-aminopeptidase of Cereibacter sphaeroides (strain KD131 / KCTC 12085) (Rhodobacter sphaeroides).